The primary structure comprises 522 residues: Maturase K (522 aa).

The protein belongs to the intron maturase 2 family. MatK subfamily.

The protein localises to the plastid. The protein resides in the chloroplast. In terms of biological role, usually encoded in the trnK tRNA gene intron. Probably assists in splicing its own and other chloroplast group II introns. In Watsonia angusta, this protein is Maturase K.